The following is a 331-amino-acid chain: Phosphoribosylformylglycinamidine cyclo-ligase (331 aa).

The protein belongs to the AIR synthase family.

Its subcellular location is the cytoplasm. The enzyme catalyses 2-formamido-N(1)-(5-O-phospho-beta-D-ribosyl)acetamidine + ATP = 5-amino-1-(5-phospho-beta-D-ribosyl)imidazole + ADP + phosphate + H(+). Its pathway is purine metabolism; IMP biosynthesis via de novo pathway; 5-amino-1-(5-phospho-D-ribosyl)imidazole from N(2)-formyl-N(1)-(5-phospho-D-ribosyl)glycinamide: step 2/2. The protein is Phosphoribosylformylglycinamidine cyclo-ligase of Clostridium botulinum (strain Langeland / NCTC 10281 / Type F).